A 409-amino-acid chain; its full sequence is Aquaporin-10 (409 aa).

2 disordered regions span residues 1-24 and 47-74; these read MADAPTYIRQSTTGTATTAPTTMP and ADVNDDNHDNYDETTGLRSGEKKTRPLV. Positions 12–22 are enriched in low complexity; sequence TTGTATTAPTT. The next 2 membrane-spanning stretches (helical) occupy residues 110–130 and 138–158; these read FLGSFILIVFGNGVVAQVVLS and LSINIGYGLAVAFGVYIAGGI. Positions 164–166 match the NPA 1 motif; sequence NPA. A helical transmembrane segment spans residues 184–204; that stretch reads VYMFAQYAGCICASAIVHAIY. The N-linked (GlcNAc...) asparagine glycan is linked to Asn-215. The next 2 helical transmembrane spans lie at 241–261 and 270–290; these read TGLADQIFATSFLMIGILALT and GGVVPILVGCLVMAIGLAYGF. The NPA 2 signature appears at 297 to 299; that stretch reads NPA. The helical transmembrane segment at 339–359 threads the bilayer; that stretch reads IPVVGPHLGALLGAAIYFFFI.

The protein belongs to the MIP/aquaporin (TC 1.A.8) family.

Its subcellular location is the cell membrane. Aquaglyceroporin that may modulate the water content and osmolytes during anhydrobiosis. The chain is Aquaporin-10 from Milnesium tardigradum (Water bear).